The following is a 343-amino-acid chain: Uroporphyrinogen decarboxylase (343 aa).

Residues 21 to 25 (RQAGR), D71, Y148, S203, and H316 each bind substrate.

It belongs to the uroporphyrinogen decarboxylase family. As to quaternary structure, homodimer.

It localises to the cytoplasm. The catalysed reaction is uroporphyrinogen III + 4 H(+) = coproporphyrinogen III + 4 CO2. It functions in the pathway porphyrin-containing compound metabolism; protoporphyrin-IX biosynthesis; coproporphyrinogen-III from 5-aminolevulinate: step 4/4. In terms of biological role, catalyzes the decarboxylation of four acetate groups of uroporphyrinogen-III to yield coproporphyrinogen-III. This Campylobacter fetus subsp. fetus (strain 82-40) protein is Uroporphyrinogen decarboxylase.